A 219-amino-acid polypeptide reads, in one-letter code: Thiamine-phosphate synthase (219 aa).

4-amino-2-methyl-5-(diphosphooxymethyl)pyrimidine is bound by residues 44 to 48 (QFREK) and N79. Residues D80 and D99 each coordinate Mg(2+). Residue S117 participates in 4-amino-2-methyl-5-(diphosphooxymethyl)pyrimidine binding. Position 143-145 (143-145 (TST)) interacts with 2-[(2R,5Z)-2-carboxy-4-methylthiazol-5(2H)-ylidene]ethyl phosphate. K146 contacts 4-amino-2-methyl-5-(diphosphooxymethyl)pyrimidine. 2-[(2R,5Z)-2-carboxy-4-methylthiazol-5(2H)-ylidene]ethyl phosphate is bound by residues G175 and 195 to 196 (IS).

Belongs to the thiamine-phosphate synthase family. Requires Mg(2+) as cofactor.

The catalysed reaction is 2-[(2R,5Z)-2-carboxy-4-methylthiazol-5(2H)-ylidene]ethyl phosphate + 4-amino-2-methyl-5-(diphosphooxymethyl)pyrimidine + 2 H(+) = thiamine phosphate + CO2 + diphosphate. It carries out the reaction 2-(2-carboxy-4-methylthiazol-5-yl)ethyl phosphate + 4-amino-2-methyl-5-(diphosphooxymethyl)pyrimidine + 2 H(+) = thiamine phosphate + CO2 + diphosphate. It catalyses the reaction 4-methyl-5-(2-phosphooxyethyl)-thiazole + 4-amino-2-methyl-5-(diphosphooxymethyl)pyrimidine + H(+) = thiamine phosphate + diphosphate. It participates in cofactor biosynthesis; thiamine diphosphate biosynthesis; thiamine phosphate from 4-amino-2-methyl-5-diphosphomethylpyrimidine and 4-methyl-5-(2-phosphoethyl)-thiazole: step 1/1. Condenses 4-methyl-5-(beta-hydroxyethyl)thiazole monophosphate (THZ-P) and 2-methyl-4-amino-5-hydroxymethyl pyrimidine pyrophosphate (HMP-PP) to form thiamine monophosphate (TMP). This is Thiamine-phosphate synthase from Bacillus thuringiensis subsp. konkukian (strain 97-27).